Reading from the N-terminus, the 892-residue chain is Zinc finger protein 512B (892 aa).

The disordered stretch occupies residues 1-82 (MTDPFCVGGR…KKGRPKAENQ (82 aa)). Positions 8–19 (GGRRLPGSSKSG) are enriched in low complexity. A C2H2-type 1; atypical zinc finger spans residues 105-129 (VKCPNSGCWLEFPSIYGLKYHYQRC). Residues 140 to 163 (FPCPFCEAAFTSKTQLEKHRIWNH) form a C2H2-type 2 zinc finger. Disordered stretches follow at residues 323-473 (MVLL…RKKV) and 562-582 (EHSA…EERE). Residues 371–384 (SMGQSSAFQLSADT) show a composition bias toward polar residues. Residues 385 to 398 (SSGSLSPGSRPSGG) are compositionally biased toward low complexity. Serine 409 carries the post-translational modification Phosphoserine. Over residues 418 to 428 (TKHRRKQKTPK) the composition is skewed to basic residues. The NuRD interaction motif motif lies at 421–427 (RRKQKTP). The C2H2-type 3 zinc finger occupies 540–563 (LKCQHCRKQFKSKAGLNYHTMAEH). The C2H2-type 4; atypical zinc finger occupies 594–618 (LRCPQEGCGAAFSSLMGYQYHQRRC). The C2H2-type 5 zinc-finger motif lies at 630 to 653 (FPCTHCGKTYRSKAGHDYHVRSEH). A disordered region spans residues 649–682 (VRSEHTAPPPEEPTDKSPEAEDPLGVERTPSGRV). Serine 686 bears the Phosphoserine mark. Residues 750 to 774 (VNCPNDCCEAIYSSVSGLKAHLASC) form a C2H2-type 6; atypical zinc finger. The C2H2-type 7 zinc-finger motif lies at 784–807 (YRCLLCPKEFSSESGVKYHILKTH). The disordered stretch occupies residues 812 to 892 (FRTSADPPPK…KVGVSKAPEK (81 aa)). Basic and acidic residues predominate over residues 819–831 (PPKHRSQDSLVPK). The segment covering 832–849 (KEKKKNLAGGKKRGRKPK) has biased composition (basic residues). The span at 850-876 (ERTPEEPVAKLPPRRDDWPPGCRDKGA) shows a compositional bias: basic and acidic residues.

It belongs to the krueppel C2H2-type zinc-finger protein family. As to quaternary structure, interacts (via its NuRD interaction motif) with RBBP4 of the nucleosome remodeling and deacetylase (NuRD) complex; the interaction is direct and may play a role in repressing gene expression.

The protein resides in the nucleus. In terms of biological role, involved in transcriptional regulation by repressing gene expression. Associates with the nucleosome remodeling and histone deacetylase (NuRD) complex, which promotes transcriptional repression by histone deacetylation and nucleosome remodeling. This Homo sapiens (Human) protein is Zinc finger protein 512B (ZNF512B).